We begin with the raw amino-acid sequence, 128 residues long: Small ribosomal subunit protein uS11 (128 aa).

Belongs to the universal ribosomal protein uS11 family. Part of the 30S ribosomal subunit. Interacts with proteins S7 and S18. Binds to IF-3.

Located on the platform of the 30S subunit, it bridges several disparate RNA helices of the 16S rRNA. Forms part of the Shine-Dalgarno cleft in the 70S ribosome. The chain is Small ribosomal subunit protein uS11 from Phytoplasma australiense.